The following is a 239-amino-acid chain: Skn-1 dependent zygotic transcript 1 protein (239 aa).

As to expression, expressed in mesendodermal precursor cells of embryos.

In terms of biological role, may have a role in mesendoderm development during embryogenesis. This Caenorhabditis elegans protein is Skn-1 dependent zygotic transcript 1 protein (sdz-1).